A 66-amino-acid polypeptide reads, in one-letter code: COP-associated protein (66 aa).

Residues 1–66 (MKIDIPVKGM…AILDAGYELG (66 aa)) enclose the HMA domain. Cu cation is bound by residues cysteine 12 and cysteine 15.

In terms of biological role, part of a cation-transporting system which is associated with copper export out of the H.pylori cells. This Helicobacter felis (strain ATCC 49179 / CCUG 28539 / NCTC 12436 / CS1) protein is COP-associated protein (copP).